The following is a 213-amino-acid chain: Ribonuclease T (213 aa).

An Exonuclease domain is found at 28 to 202; sequence VVVDVETGGF…YDTEQTARLF (175 aa). Positions 31, 33, 189, and 194 each coordinate Mg(2+). His-189 acts as the Proton donor/acceptor in catalysis.

The protein belongs to the RNase T family. As to quaternary structure, homodimer. Mg(2+) serves as cofactor.

Functionally, trims short 3' overhangs of a variety of RNA species, leaving a one or two nucleotide 3' overhang. Responsible for the end-turnover of tRNA: specifically removes the terminal AMP residue from uncharged tRNA (tRNA-C-C-A). Also appears to be involved in tRNA biosynthesis. The sequence is that of Ribonuclease T from Xanthomonas euvesicatoria pv. vesicatoria (strain 85-10) (Xanthomonas campestris pv. vesicatoria).